Consider the following 474-residue polypeptide: Isoflavone 7-O-glucosyltransferase 1 (474 aa).

Residues 1 to 49 constitute a propeptide, removed in mature form; it reads MKDTIVLYPNLGRGHLVSMVELGKLILTHHPSLSITILILTPPTTPSTT. His-15 acts as the Proton acceptor in catalysis. An anthocyanidin is bound at residue His-15. Asp-125 (charge relay) is an active-site residue. UDP-alpha-D-glucose contacts are provided by Thr-150, Ala-351, Gln-353, His-368, Trp-371, Asn-372, Ser-373, and Glu-376. Residue Ala-391 participates in an anthocyanidin binding. Positions 392 and 393 each coordinate UDP-alpha-D-glucose.

The protein belongs to the UDP-glycosyltransferase family. Monomer. In terms of tissue distribution, expressed in shoots, leaves, cotyledons, epicotyls, hypocotyls, roots, pods, seeds and flowers.

The catalysed reaction is a 7-hydroxyisoflavone + UDP-alpha-D-glucose = a 7-hydroxyisoflavone 7-O-beta-D-glucoside + UDP + H(+). Involved in the biosynthesis of isoflavonoids. Specific for UDP-glucose. Can use genistein &gt; daidzein &gt; formononetin &gt; quercetin &gt; kaempferol &gt; 4,2',4',6'-tetrahydroxychalcone &gt; apigenin &gt; aureusidin &gt; esculetin &gt; naringenin as substrates, but not cyanidin, trans-p-coumaric acid, caffeic acid, benzoic acid, m- and p-hydroxybenzoic acids, salicylic acid, salicyl alcohol, and hydroquinone. This is Isoflavone 7-O-glucosyltransferase 1 (GmIF7GT1) from Glycine max (Soybean).